A 557-amino-acid polypeptide reads, in one-letter code: Dihydroxy-acid dehydratase (557 aa).

Position 50 (Cys-50) interacts with [2Fe-2S] cluster. Position 82 (Asp-82) interacts with Mg(2+). Cys-123 is a binding site for [2Fe-2S] cluster. Residues Asp-124 and Lys-125 each coordinate Mg(2+). Lys-125 carries the N6-carboxylysine modification. A [2Fe-2S] cluster-binding site is contributed by Cys-195. Glu-447 contacts Mg(2+). Catalysis depends on Ser-473, which acts as the Proton acceptor.

The protein belongs to the IlvD/Edd family. As to quaternary structure, homodimer. [2Fe-2S] cluster is required as a cofactor. Mg(2+) serves as cofactor.

It catalyses the reaction (2R)-2,3-dihydroxy-3-methylbutanoate = 3-methyl-2-oxobutanoate + H2O. The enzyme catalyses (2R,3R)-2,3-dihydroxy-3-methylpentanoate = (S)-3-methyl-2-oxopentanoate + H2O. It functions in the pathway amino-acid biosynthesis; L-isoleucine biosynthesis; L-isoleucine from 2-oxobutanoate: step 3/4. The protein operates within amino-acid biosynthesis; L-valine biosynthesis; L-valine from pyruvate: step 3/4. Functionally, functions in the biosynthesis of branched-chain amino acids. Catalyzes the dehydration of (2R,3R)-2,3-dihydroxy-3-methylpentanoate (2,3-dihydroxy-3-methylvalerate) into 2-oxo-3-methylpentanoate (2-oxo-3-methylvalerate) and of (2R)-2,3-dihydroxy-3-methylbutanoate (2,3-dihydroxyisovalerate) into 2-oxo-3-methylbutanoate (2-oxoisovalerate), the penultimate precursor to L-isoleucine and L-valine, respectively. The polypeptide is Dihydroxy-acid dehydratase (Ralstonia nicotianae (strain ATCC BAA-1114 / GMI1000) (Ralstonia solanacearum)).